The chain runs to 141 residues: Large ribosomal subunit protein uL13 (141 aa).

It belongs to the universal ribosomal protein uL13 family. As to quaternary structure, part of the 50S ribosomal subunit.

Functionally, this protein is one of the early assembly proteins of the 50S ribosomal subunit, although it is not seen to bind rRNA by itself. It is important during the early stages of 50S assembly. The polypeptide is Large ribosomal subunit protein uL13 (Deinococcus deserti (strain DSM 17065 / CIP 109153 / LMG 22923 / VCD115)).